Reading from the N-terminus, the 248-residue chain is 2,3-bisphosphoglycerate-dependent phosphoglycerate mutase (248 aa).

Residues 10–17, 23–24, Arg62, 89–92, Lys100, 116–117, and 183–184 contribute to the substrate site; these read RHGQSQWN, TG, ERHY, RR, and GN. His11 (tele-phosphohistidine intermediate) is an active-site residue. Glu89 (proton donor/acceptor) is an active-site residue.

This sequence belongs to the phosphoglycerate mutase family. BPG-dependent PGAM subfamily.

The catalysed reaction is (2R)-2-phosphoglycerate = (2R)-3-phosphoglycerate. Its pathway is carbohydrate degradation; glycolysis; pyruvate from D-glyceraldehyde 3-phosphate: step 3/5. Its function is as follows. Catalyzes the interconversion of 2-phosphoglycerate and 3-phosphoglycerate. The sequence is that of 2,3-bisphosphoglycerate-dependent phosphoglycerate mutase from Corynebacterium kroppenstedtii (strain DSM 44385 / JCM 11950 / CIP 105744 / CCUG 35717).